A 500-amino-acid polypeptide reads, in one-letter code: Probable cytosol aminopeptidase 1 (500 aa).

The Mn(2+) site is built by K263 and D268. The active site involves K275. Residues D287, D346, and E348 each contribute to the Mn(2+) site. R350 is a catalytic residue.

Belongs to the peptidase M17 family. Requires Mn(2+) as cofactor.

The protein localises to the cytoplasm. It carries out the reaction Release of an N-terminal amino acid, Xaa-|-Yaa-, in which Xaa is preferably Leu, but may be other amino acids including Pro although not Arg or Lys, and Yaa may be Pro. Amino acid amides and methyl esters are also readily hydrolyzed, but rates on arylamides are exceedingly low.. The enzyme catalyses Release of an N-terminal amino acid, preferentially leucine, but not glutamic or aspartic acids.. Its function is as follows. Presumably involved in the processing and regular turnover of intracellular proteins. Catalyzes the removal of unsubstituted N-terminal amino acids from various peptides. The polypeptide is Probable cytosol aminopeptidase 1 (pepA1) (Shewanella oneidensis (strain ATCC 700550 / JCM 31522 / CIP 106686 / LMG 19005 / NCIMB 14063 / MR-1)).